A 251-amino-acid polypeptide reads, in one-letter code: Hydroxypyruvate/pyruvate aldolase (251 aa).

H44 (proton acceptor) is an active-site residue. R69 is a 3-hydroxypyruvate binding site. E145 is a binding site for Mg(2+). T170 and D171 together coordinate 3-hydroxypyruvate. D171 contributes to the Mg(2+) binding site.

Belongs to the HpcH/HpaI aldolase family. Homohexamer. Trimer of homodimers. It depends on Mn(2+) as a cofactor. The cofactor is Mg(2+). Co(2+) is required as a cofactor. Requires Zn(2+) as cofactor.

It carries out the reaction D-glyceraldehyde + 3-hydroxypyruvate = 2-dehydro-D-galactonate. The catalysed reaction is D-glyceraldehyde + pyruvate = 2-dehydro-3-deoxy-L-galactonate. It catalyses the reaction L-glyceraldehyde + 3-hydroxypyruvate = (3S,4S,5S)-3,4,5,6-tetrahydroxy-2-oxohexanoate. The enzyme catalyses (R)-lactaldehyde + 3-hydroxypyruvate = (3S,4S,5R)-3,4,5-trihydroxy-2-oxohexanoate. It carries out the reaction (R)-lactaldehyde + 3-hydroxypyruvate = (3S,4R,5R)-3,4,5-trihydroxy-2-oxohexanoate. The catalysed reaction is (S)-lactaldehyde + 3-hydroxypyruvate = (3S,4S,5S)-3,4,5-trihydroxy-2-oxohexanoate. It catalyses the reaction D-erythrose + 3-hydroxypyruvate = (3S,4S,5R,6R)-3,4,5,6,7-pentahydroxy-2-oxoheptanoate. Binding of substrate induces a dynamic movement of the metal cofactor between an inactive coordination sphere to a catalytically active one. When oxaloacetate is used as substrate, activity is increased in the presence of micromolar concentrations of inorganic phosphate. The phosphate does not improve the binding of the substrate, but exclusively increases its rate of decarboxylation. Excessive phosphate concentrations negatively affect the reaction rate by removing the metal cofactor. Aldolase which can catalyze in vitro the aldolisation reaction between hydroxypyruvate (HPA) or pyruvate (PA) and D-glyceraldehyde (D-GA). The condensation of hydroxypyruvate and D-glyceraldehyde produces 2-dehydro-D-galactonate as the major product. The condensation of pyruvate and D-glyceraldehyde produces 2-dehydro-3-deoxy-L-galactonate. Can use other electrophilic substrates such as L-glyceraldehyde, D- and L-lactaldehyde and D-erythrose. Also catalyzes the retro-aldol type decarboxylation of oxaloacetate, a general property of known pyruvate aldolases. This is Hydroxypyruvate/pyruvate aldolase from Rhizorhabdus wittichii (strain DSM 6014 / CCUG 31198 / JCM 15750 / NBRC 105917 / EY 4224 / RW1) (Sphingomonas wittichii).